The following is a 553-amino-acid chain: Putative transport protein YidE (553 aa).

A run of 5 helical transmembrane segments spans residues 4 to 24, 28 to 48, 65 to 85, 95 to 115, and 158 to 178; these read IALT…IGNV, GIGL…HFVS, FGLI…FFAS, LFAV…HKLF, and MSYA…MWML. RCK C-terminal domains lie at 191–276 and 279–361; these read QQHE…VIGQ and DTSL…VLGN. 6 helical membrane-spanning segments follow: residues 371 to 391, 393 to 413, 431 to 448, 464 to 484, 493 to 513, and 533 to 553; these read MLPV…PVFV, GFPA…ALIL, NLAL…VVGL, LSWI…VGIL, YLTM…LAFA, and LVMF…WSIG.

This sequence belongs to the AAE transporter (TC 2.A.81) family. YidE subfamily.

Its subcellular location is the cell membrane. The protein is Putative transport protein YidE of Shigella sonnei (strain Ss046).